The primary structure comprises 199 residues: V-set and transmembrane domain-containing protein 5 (199 aa).

Residues 1-27 (MRPPRCVGRTQGIPLGLLAFWVATARC) form the signal peptide. At 28-146 (LQSQGVSLYI…VSEIRYEDLH (119 aa)) the chain is on the extracellular side. The region spanning 36–138 (YIPRSAINAT…QSGTILLHVS (103 aa)) is the Ig-like C2-type domain. Asn43, Asn87, and Asn101 each carry an N-linked (GlcNAc...) asparagine glycan. A helical transmembrane segment spans residues 147–167 (FVAVFFALLAAVAVVLISLMW). The Cytoplasmic portion of the chain corresponds to 168 to 199 (VCNQCAYKFQRKRRYKLRESTTEEIEMKDVEC). Positions 169-185 (CNQCAYKFQRKRRYKLR) are important for CDC42-dependent filopodia induction.

Can homooligomerize through cis interactions within the same cell membrane. In terms of processing, N-glycosylated.

The protein resides in the cell membrane. It localises to the cell projection. It is found in the dendrite. The protein localises to the axon. Functionally, cell adhesion-like membrane protein of the central nervous system (CNS) which modulates both the position and complexity of central neurons by altering their membrane morphology and dynamics. Involved in the formation of neuronal dendrites and protrusions including dendritic filopodia. In synaptogenesis, regulates synapse formation by altering dendritic spine morphology and actin distribution. Promotes formation of unstable neuronal spines such as thin and branched types. Regulates neuronal morphogenesis and migration during cortical development in the brain. The chain is V-set and transmembrane domain-containing protein 5 (Vstm5) from Rattus norvegicus (Rat).